Here is a 209-residue protein sequence, read N- to C-terminus: LexA repressor (209 aa).

Positions R30–K50 form a DNA-binding region, H-T-H motif. Residues S126 and K163 each act as for autocatalytic cleavage activity in the active site.

This sequence belongs to the peptidase S24 family. In terms of assembly, homodimer.

It carries out the reaction Hydrolysis of Ala-|-Gly bond in repressor LexA.. Its function is as follows. Represses a number of genes involved in the response to DNA damage (SOS response), including recA and lexA. In the presence of single-stranded DNA, RecA interacts with LexA causing an autocatalytic cleavage which disrupts the DNA-binding part of LexA, leading to derepression of the SOS regulon and eventually DNA repair. The protein is LexA repressor of Glaesserella parasuis serovar 5 (strain SH0165) (Haemophilus parasuis).